Consider the following 260-residue polypeptide: 3'-5' ssDNA/RNA exonuclease TatD (260 aa).

Residues E92, H128, and H153 each contribute to the a divalent metal cation site.

This sequence belongs to the metallo-dependent hydrolases superfamily. TatD-type hydrolase family. TatD subfamily. In terms of assembly, monomer. Mg(2+) serves as cofactor.

Its subcellular location is the cytoplasm. 3'-5' exonuclease that prefers single-stranded DNA and RNA. May play a role in the H(2)O(2)-induced DNA damage repair. The polypeptide is 3'-5' ssDNA/RNA exonuclease TatD (Pantoea ananatis (strain LMG 20103)).